A 192-amino-acid chain; its full sequence is Probable chorismate pyruvate-lyase (192 aa).

Substrate-binding residues include Arg85, Leu120, and Glu176.

The protein belongs to the UbiC family.

It is found in the cytoplasm. The catalysed reaction is chorismate = 4-hydroxybenzoate + pyruvate. It functions in the pathway cofactor biosynthesis; ubiquinone biosynthesis. In terms of biological role, removes the pyruvyl group from chorismate, with concomitant aromatization of the ring, to provide 4-hydroxybenzoate (4HB) for the ubiquinone pathway. This is Probable chorismate pyruvate-lyase from Pseudoalteromonas atlantica (strain T6c / ATCC BAA-1087).